Here is a 142-residue protein sequence, read N- to C-terminus: Putative arsenate reductase (142 aa).

The protein belongs to the low molecular weight phosphotyrosine protein phosphatase family.

In terms of biological role, reduces arsenate [As(V)] to arsenite [As(III)]. In Halobacterium salinarum (strain ATCC 700922 / JCM 11081 / NRC-1) (Halobacterium halobium), this protein is Putative arsenate reductase (arsC).